Reading from the N-terminus, the 566-residue chain is Cytochrome c oxidase subunit 1 (566 aa).

A run of 7 helical transmembrane segments spans residues Ile-29–Val-49, Val-97–Gly-117, Leu-141–Gly-161, Leu-189–Ile-209, Leu-227–Ala-247, Ile-278–Val-298, and Ile-310–Val-330. Fe(II)-heme a is bound at residue His-102. Cu cation-binding residues include His-284 and Tyr-288. The segment at residues His-284 to Tyr-288 is a cross-link (1'-histidyl-3'-tyrosine (His-Tyr)). Residues His-333 and His-334 each coordinate Cu cation. 2 consecutive transmembrane segments (helical) span residues Phe-348–Ala-368 and Met-381–Leu-401. His-419 is a heme a3 binding site. The next 3 membrane-spanning stretches (helical) occupy residues Phe-420–Ile-440, Leu-455–Gly-475, and Leu-499–Leu-519. His-421 provides a ligand contact to Fe(II)-heme a. The tract at residues Thr-543–His-566 is disordered. The segment covering His-549–His-566 has biased composition (basic and acidic residues).

The protein belongs to the heme-copper respiratory oxidase family. Cu(2+) is required as a cofactor. Requires heme as cofactor.

It localises to the cell membrane. It carries out the reaction 4 Fe(II)-[cytochrome c] + O2 + 8 H(+)(in) = 4 Fe(III)-[cytochrome c] + 2 H2O + 4 H(+)(out). The protein operates within energy metabolism; oxidative phosphorylation. Cytochrome c oxidase is the component of the respiratory chain that catalyzes the reduction of oxygen to water. Subunits 1-3 form the functional core of the enzyme complex. Co I is the catalytic subunit of the enzyme. Electrons originating in cytochrome c are transferred via the copper A center of subunit 2 and heme a of subunit 1 to the bimetallic center formed by heme a3 and copper B. This cytochrome c oxidase shows proton pump activity across the membrane in addition to the electron transfer. In Cereibacter sphaeroides (Rhodobacter sphaeroides), this protein is Cytochrome c oxidase subunit 1 (ctaD).